Consider the following 239-residue polypeptide: Purine nucleoside phosphorylase DeoD-type (239 aa).

An a purine D-ribonucleoside-binding site is contributed by His5. The phosphate site is built by Gly21 and Arg25. Lys27 is subject to N6-acetyllysine. Residues Arg44 and 88-91 (RVGS) each bind phosphate. A purine D-ribonucleoside-binding positions include 180–182 (EME) and 204–205 (SD). Asp205 serves as the catalytic Proton donor.

This sequence belongs to the PNP/UDP phosphorylase family. Homohexamer; trimer of homodimers.

The catalysed reaction is a purine D-ribonucleoside + phosphate = a purine nucleobase + alpha-D-ribose 1-phosphate. It carries out the reaction a purine 2'-deoxy-D-ribonucleoside + phosphate = a purine nucleobase + 2-deoxy-alpha-D-ribose 1-phosphate. In terms of biological role, catalyzes the reversible phosphorolytic breakdown of the N-glycosidic bond in the beta-(deoxy)ribonucleoside molecules, with the formation of the corresponding free purine bases and pentose-1-phosphate. In Escherichia coli O8 (strain IAI1), this protein is Purine nucleoside phosphorylase DeoD-type.